The following is a 111-amino-acid chain: Movement protein TGB2 (111 aa).

Residues 1-16 lie on the Cytoplasmic side of the membrane; sequence MSSHQNFLTPPPDHSK. A helical membrane pass occupies residues 17–37; it reads AILAVAVGVGLAIVLHFSLSY. Residues 38 to 72 are Lumenal-facing; that stretch reads KLPSPGDNIHSLPFGGTYRDGTKSIIYNSPHRGPG. Residues 73 to 93 form a helical membrane-spanning segment; that stretch reads QSGALPIITVFAIIECTLHVL. Over 94–111 the chain is Cytoplasmic; the sequence is RKRDNPVRPQHSDCPNCS.

It belongs to the Tymovirales TGBp2 protein family.

The protein localises to the host endoplasmic reticulum membrane. In terms of biological role, plays a role in viral cell-to-cell propagation, by facilitating genome transport to neighboring plant cells through plasmosdesmata,. The chain is Movement protein TGB2 from Carica papaya (Papaya).